The chain runs to 1006 residues: Transcription factor tau subunit sfc4 (1006 aa).

The disordered stretch occupies residues 64–91 (GLWSDEESDYEGSDDESNFSKTASRTED). Acidic residues predominate over residues 66-80 (WSDEESDYEGSDDES). 6 TPR repeats span residues 133–166 (QQMLSLANHLFAQEGNFDEAQKLAEEIVRIDNNV), 205–238 (HELWFTCAKLSESLEFWDQADYCYNRAVSAKPPN), 277–310 (ASILKNLAEIYIKIHAPREILKQFEIAWKYFYQY), 396–429 (HLFRTKLGIARLKTGELPEAELHFSVIKNLPPDY), 431–464 (WGMLYDIAKAYMDIERLDLALEYFVLICNHEPAQ), and 466–499 (IGLWYNMGVCYLELKEYEHAQQCMEAILIVDNSN). The stretch at 506–554 (LAEINELQDNRDAALEIVTNIFEQRRNINELEREQSQNEDHEKNVGSQL) forms a coiled coil. TPR repeat units follow at residues 841–874 (PVLVLLYGHIMARNRSWIPAINYYSRAFAINPDC) and 924–957 (QEALYNLGKAYHFIGLEHYAVKYYEAVLGLSPMS).

Component of the TFIIIC complex including sfc1, sfc3, sfc4, sfc6 and sfc7. The subunits are organized in two globular domains, tauA and tauB, connected by a proteolysis-sensitive and flexible linker. Interacts with sfc1, sfc3 and sfc6. Post-translationally, phosphorylated.

The protein localises to the nucleus. Its function is as follows. TFIIIC mediates tRNA and 5S RNA gene activation by binding to intragenic promoter elements. Upstream of the transcription start site, TFIIIC assembles the initiation complex TFIIIB-TFIIIC-tDNA, which is sufficient for RNA polymerase III recruitment and function. Part of the tauA domain of TFIIIC that binds boxA DNA promoter sites of tRNA and similar genes. Sfc4 is the TFIIIB assembling subunit of TFIIIC. This chain is Transcription factor tau subunit sfc4, found in Schizosaccharomyces pombe (strain 972 / ATCC 24843) (Fission yeast).